The sequence spans 502 residues: Mannitol 2-dehydrogenase (502 aa).

Residue 37–48 (IVHIGVGGFHRA) coordinates NAD(+).

The protein belongs to the mannitol dehydrogenase family. As to quaternary structure, monomer.

It carries out the reaction D-mannitol + NAD(+) = D-fructose + NADH + H(+). Its function is as follows. Catalyzes the NAD(H)-dependent interconversion of D-fructose and D-mannitol in the mannitol metabolic pathway. This chain is Mannitol 2-dehydrogenase, found in Neosartorya fischeri (strain ATCC 1020 / DSM 3700 / CBS 544.65 / FGSC A1164 / JCM 1740 / NRRL 181 / WB 181) (Aspergillus fischerianus).